Consider the following 638-residue polypeptide: Epithelial sodium channel subunit delta (638 aa).

The segment covering 1–13 (MAEHRSMDGRMEA) has biased composition (basic and acidic residues). The disordered stretch occupies residues 1–47 (MAEHRSMDGRMEAATRGGSHLQAAAQTPPRPGPPSAPPPPPKEGHQE). Residues 1–86 (MAEHRSMDGR…CSRGNRLKTT (86 aa)) lie on the Cytoplasmic side of the membrane. Residues 28–41 (PPRPGPPSAPPPPP) show a composition bias toward pro residues. The chain crosses the membrane as a helical span at residues 87–107 (SWGLLSLGALVALCWQLGLLF). Over 108–530 (ERHWHRPVLM…VPQLLSAMGS (423 aa)) the chain is Extracellular. Asn166 and Asn384 each carry an N-linked (GlcNAc...) asparagine glycan. Residues 531–551 (LCSLWFGASVLSLLELLELLL) traverse the membrane as a helical segment. Residues 552–638 (DASALTLVLG…GPQPLETLDT (87 aa)) lie on the Cytoplasmic side of the membrane. A disordered region spans residues 574–613 (RASPASGASSIKPEASQMPTPAGGTSDDPEPSGPHLPRVM).

It belongs to the amiloride-sensitive sodium channel (TC 1.A.6) family. SCNN1D subfamily. Can form an alternative heterotrimeric epithelial sodium channel (ENaC), composed of a delta (SCNN1D), beta (SCNN1B), and gamma (SCNN1G) subunit, where the delta (SCNN1D) subunit replaces the alpha (SCNN1A) subunit.

The protein localises to the apical cell membrane. It carries out the reaction Na(+)(in) = Na(+)(out). Its activity is regulated as follows. Originally identified and characterized by its inhibition by the diuretic drug amiloride. Functionally, potential alternative pore-forming subunit of the epithelial sodium channel (ENaC), capable of replacing the alpha/SCNN1A subunit, creating a more active channel with distinct properties. ENaC functions in epithelial tissues, where it facilitates the electrodiffusion of sodium ions from the extracellular fluid through the apical membrane of cells, with water following osmotically, regulating sodium balance and fluid homeostasis. This subunit could also function independently as a sodium channel or assemble into other tissue-specific heterotrimeric sodium channels. This is Epithelial sodium channel subunit delta from Pan troglodytes (Chimpanzee).